The primary structure comprises 789 residues: Fibrinogen alpha chain (789 aa).

An N-terminal signal peptide occupies residues 1–19 (MLSLRVTCLILSVASTVWT). A Phosphoserine modification is found at serine 46. Residues 69 to 554 (CRMKGLIDEA…GRARARPTRD (486 aa)) adopt a coiled-coil conformation. Composition is skewed to basic and acidic residues over residues 263–287 (ERPGKDGGSRGDSPGDSRGDSRGDF) and 384–396 (KGDKELLIGKEKV). Positions 263 to 420 (ERPGKDGGSR…TITKTVTGPD (158 aa)) are disordered. Polar residues predominate over residues 397–416 (TSSGTSTTHRSCSKTITKTV). The cysteines at positions 408 and 438 are disulfide-linked. Position 447 is a phosphoserine (serine 447). Position 504 is a 4-hydroxyproline; by P4HA1 (proline 504). The span at 526–541 (ADEAGSEAHREGETRN) shows a compositional bias: basic and acidic residues. A disordered region spans residues 526–555 (ADEAGSEAHREGETRNTKRGRARARPTRDC). The 242-residue stretch at 546-787 (RARARPTRDC…AVRMKIRPLV (242 aa)) folds into the Fibrinogen C-terminal domain. N-linked (GlcNAc...) asparagine glycosylation occurs at asparagine 609. Ca(2+) contacts are provided by aspartate 714, aspartate 716, tryptophan 718, and glutamate 720. Residues cysteine 722 and cysteine 735 are joined by a disulfide bond.

In terms of assembly, heterohexamer; disulfide linked. Contains 2 sets of 3 non-identical chains (alpha, beta and gamma). The 2 heterotrimers are in head to head conformation with the N-termini in a small central domain. Conversion of fibrinogen to fibrin is triggered by thrombin, which cleaves fibrinopeptides A and B from alpha and beta chains, and thus exposes the N-terminal polymerization sites responsible for the formation of the soft clot. The soft clot is converted into the hard clot by factor XIIIA which catalyzes the epsilon-(gamma-glutamyl)lysine cross-linking between gamma chains (stronger) and between alpha chains (weaker) of different monomers. In terms of processing, forms F13A-mediated cross-links between a glutamine and the epsilon-amino group of a lysine residue, forming fibronectin-fibrinogen heteropolymers. Post-translationally, phosphorylated by FAM20C in the extracellular medium. As to expression, expressed in liver.

It localises to the secreted. Cleaved by the protease thrombin to yield monomers which, together with fibrinogen beta (FGB) and fibrinogen gamma (FGG), polymerize to form an insoluble fibrin matrix. Fibrin has a major function in hemostasis as one of the primary components of blood clots. In addition, functions during the early stages of wound repair to stabilize the lesion and guide cell migration during re-epithelialization. Was originally thought to be essential for platelet aggregation, based on in vitro studies using anticoagulated blood. However, subsequent studies have shown that it is not absolutely required for thrombus formation in vivo. Enhances expression of SELP in activated platelets via an ITGB3-dependent pathway. Maternal fibrinogen is essential for successful pregnancy. Fibrin deposition is also associated with infection, where it protects against IFNG-mediated hemorrhage. May also facilitate the immune response via both innate and T-cell mediated pathways. The sequence is that of Fibrinogen alpha chain from Mus musculus (Mouse).